The following is an 833-amino-acid chain: Leucine--tRNA ligase (833 aa).

Positions 41-52 (PYPSGAGLHVGH) match the 'HIGH' region motif. The 'KMSKS' region signature appears at 610 to 614 (KMSKS). Residue Lys613 coordinates ATP.

It belongs to the class-I aminoacyl-tRNA synthetase family.

The protein localises to the cytoplasm. The catalysed reaction is tRNA(Leu) + L-leucine + ATP = L-leucyl-tRNA(Leu) + AMP + diphosphate. The polypeptide is Leucine--tRNA ligase (Streptococcus pyogenes serotype M12 (strain MGAS2096)).